The chain runs to 367 residues: tRNA pseudouridine synthase D (367 aa).

Catalysis depends on aspartate 80, which acts as the Nucleophile. The TRUD domain maps to 156-316; sequence GIPNWFGEQR…LKQERRALRL (161 aa).

It belongs to the pseudouridine synthase TruD family.

It catalyses the reaction uridine(13) in tRNA = pseudouridine(13) in tRNA. In terms of biological role, responsible for synthesis of pseudouridine from uracil-13 in transfer RNAs. The chain is tRNA pseudouridine synthase D from Xanthomonas campestris pv. campestris (strain 8004).